The sequence spans 535 residues: Cytochrome c oxidase subunit 1 (535 aa).

The helical transmembrane segment at 15–37 (IAILYFIFSTFCGLAGTAMSFII) threads the bilayer. Glutamate 40, alanine 43, and glycine 45 together coordinate Ca(2+). Transmembrane regions (helical) follow at residues 58 to 80 (VLVT…IGGF), 147 to 169 (LAIF…FIVT), 190 to 212 (ILIT…TMLL), 238 to 260 (WFFG…SHIV), and 267 to 289 (PVFG…FLVW). Histidine 63 provides a ligand contact to Fe(II)-heme a. Histidine 242 lines the Cu cation pocket. Residues 242-246 (HPEVY) constitute a cross-link (1'-histidyl-3'-tyrosine (His-Tyr)). An O2-binding site is contributed by tyrosine 246. Cu cation is bound by residues histidine 291 and histidine 292. 2 helical membrane passes run 304–326 (AYFT…SWLT) and 339–361 (MLYT…VLAN). Residues histidine 369 and aspartate 370 each coordinate Mg(2+). 2 helical membrane-spanning segments follow: residues 376–398 (THFH…YYWS) and 415–437 (FWLI…INGM). Histidine 377 contributes to the heme a3 binding site. Histidine 379 provides a ligand contact to Fe(II)-heme a. Proline 442 is a Ca(2+) binding site. The helical transmembrane segment at 452–474 (NLVSSFGSMMTIMSLMLFTYIIY) threads the bilayer.

This sequence belongs to the heme-copper respiratory oxidase family. In terms of assembly, component of the cytochrome c oxidase (complex IV, CIV), a multisubunit enzyme composed of a catalytic core of 3 subunits and several supernumerary subunits. The complex exists as a monomer or a dimer and forms supercomplexes (SCs) in the inner mitochondrial membrane with ubiquinol-cytochrome c oxidoreductase (cytochrome b-c1 complex, complex III, CIII). It depends on heme as a cofactor. Cu cation serves as cofactor.

The protein localises to the mitochondrion inner membrane. It carries out the reaction 4 Fe(II)-[cytochrome c] + O2 + 8 H(+)(in) = 4 Fe(III)-[cytochrome c] + 2 H2O + 4 H(+)(out). Its pathway is energy metabolism; oxidative phosphorylation. Functionally, component of the cytochrome c oxidase, the last enzyme in the mitochondrial electron transport chain which drives oxidative phosphorylation. The respiratory chain contains 3 multisubunit complexes succinate dehydrogenase (complex II, CII), ubiquinol-cytochrome c oxidoreductase (cytochrome b-c1 complex, complex III, CIII) and cytochrome c oxidase (complex IV, CIV), that cooperate to transfer electrons derived from NADH and succinate to molecular oxygen, creating an electrochemical gradient over the inner membrane that drives transmembrane transport and the ATP synthase. Cytochrome c oxidase is the component of the respiratory chain that catalyzes the reduction of oxygen to water. Electrons originating from reduced cytochrome c in the intermembrane space (IMS) are transferred via the dinuclear copper A center (CU(A)) of subunit 2 and heme A of subunit 1 to the active site in subunit 1, a binuclear center (BNC) formed by heme A3 and copper B (CU(B)). The BNC reduces molecular oxygen to 2 water molecules using 4 electrons from cytochrome c in the IMS and 4 protons from the mitochondrial matrix. This chain is Cytochrome c oxidase subunit 1 (COX1), found in Eremothecium gossypii (strain ATCC 10895 / CBS 109.51 / FGSC 9923 / NRRL Y-1056) (Yeast).